The following is a 795-amino-acid chain: Plakophilin-2 (795 aa).

Positions 1-318 (MAVPGSLAEC…MTLERAVNML (318 aa)) are required for binding to single-stranded DNA. Residue Ser-44 is modified to Phosphoserine. Arg-46 carries the post-translational modification Omega-N-methylarginine. Phosphoserine occurs at positions 82, 132, 135, 151, 154, 155, 172, 188, and 232. 2 disordered regions span residues 197 to 233 (GTAR…SHSA) and 245 to 274 (SQAR…REPG). Residues 245–257 (SQARLQSTQSRTA) are compositionally biased toward polar residues. Positions 258–268 (RSSWPRSSVRS) are enriched in low complexity. Phosphoserine occurs at positions 265 and 287. 8 ARM repeats span residues 299–339 (DAQL…QHES), 343–382 (SEAR…NLVF), 385–425 (NDNK…NLSS), 484–530 (PDGR…NLSY), 585–625 (PHGI…NLTA), 633–672 (LVAR…NLSR), 677–718 (QNEI…NLMQ), and 721–763 (YQNA…SLWA).

This sequence belongs to the beta-catenin family. In terms of assembly, interacts with DSC2. Interacts with JUP. Interacts with KRT5/CK5, KRT8/CK8, KRT14/CK14, KRT18/CK18 and VIM. Interacts (via N-terminus) with MARK3/C-TAK1. Interacts with DSP. Interacts with DSG1, DSG2 and DSG3. Interacts (via N-terminus) with CTNNB1. Interacts with CDH1. Interacts with the RNA polymerase III (Pol III) complex proteins POLR3A/RPC155, POLR3F/RPC39 and POLR3C/RPC82. Interacts with CTNNA3. Interacts (via N-terminus) with SCN5A/Nav1.5. Interacts with ANK3/ANKG and GJA1/CX43. As to expression, expressed in cardiomyocytes in the heart (at protein level).

It is found in the nucleus. It localises to the cell junction. The protein localises to the desmosome. The protein resides in the cytoplasm. In terms of biological role, a component of desmosome cell-cell junctions which are required for positive regulation of cellular adhesion. Regulates focal adhesion turnover resulting in changes in focal adhesion size, cell adhesion and cell spreading, potentially via transcriptional modulation of beta-integrins. Required to maintain gingival epithelial barrier function. Important component of the desmosome that is also required for localization of desmosome component proteins such as DSC2, DSG2 and JUP to the desmosome cell-cell junction. Required for the formation of desmosome cell junctions in cardiomyocytes, thereby required for the correct formation of the heart, specifically trabeculation and formation of the atria walls. Loss of desmosome cell junctions leads to mis-localization of DSP and DSG2 resulting in disruption of cell-cell adhesion and disordered intermediate filaments. Modulates profibrotic gene expression in cardiomyocytes via regulation of DSP expression and subsequent activation of downstream TGFB1 and MAPK14/p38 MAPK signaling. Required for cardiac sodium current propagation and electrical synchrony in cardiac myocytes, via ANK3 stabilization and modulation of SCN5A/Nav1.5 localization to cell-cell junctions. Required for mitochondrial function, nuclear envelope integrity and positive regulation of SIRT3 transcription via maintaining DES localization at its nuclear envelope and cell tip anchoring points, and thereby preserving regulation of the transcriptional program. Maintenance of nuclear envelope integrity protects against DNA damage and transcriptional dysregulation of genes, especially those involved in the electron transport chain, thereby preserving mitochondrial function and protecting against superoxide radical anion generation. Binds single-stranded DNA (ssDNA). May regulate the localization of GJA1 to gap junctions in intercalated disks of the heart. This is Plakophilin-2 from Mus musculus (Mouse).